Consider the following 422-residue polypeptide: UDP-N-acetylglucosamine 1-carboxyvinyltransferase (422 aa).

Lys-22–Asn-23 contacts phosphoenolpyruvate. Position 93 (Arg-93) interacts with UDP-N-acetyl-alpha-D-glucosamine. Cys-117 serves as the catalytic Proton donor. Cys-117 is modified (2-(S-cysteinyl)pyruvic acid O-phosphothioketal). UDP-N-acetyl-alpha-D-glucosamine is bound by residues Arg-122–Leu-126, Asp-308, and Leu-330.

The protein belongs to the EPSP synthase family. MurA subfamily.

Its subcellular location is the cytoplasm. It catalyses the reaction phosphoenolpyruvate + UDP-N-acetyl-alpha-D-glucosamine = UDP-N-acetyl-3-O-(1-carboxyvinyl)-alpha-D-glucosamine + phosphate. It participates in cell wall biogenesis; peptidoglycan biosynthesis. In terms of biological role, cell wall formation. Adds enolpyruvyl to UDP-N-acetylglucosamine. The polypeptide is UDP-N-acetylglucosamine 1-carboxyvinyltransferase (Helicobacter acinonychis (strain Sheeba)).